Consider the following 271-residue polypeptide: Proteasome inhibitor PI31 subunit (271 aa).

An N-acetylalanine modification is found at A2. The interval 2 to 150 (AGLEVLFASA…PIHEQWEKAN (149 aa)) is important for homodimerization and interaction with FBXO7. At S153 the chain carries Phosphoserine. R205 bears the Omega-N-methylarginine mark. Asymmetric dimethylarginine is present on R219. The interval 222–271 (IDPSSGLPNRLPPGAVPPGARFDPFGPIGTSPPGPNPDHLPPPGYDDMYL) is disordered. R231 bears the Omega-N-methylarginine mark. Residues 251 to 265 (TSPPGPNPDHLPPPG) are compositionally biased toward pro residues. The residue at position 252 (S252) is a Phosphoserine.

The protein belongs to the proteasome inhibitor PI31 family. Monomer and homodimer. Interacts with FBXO7.

It localises to the cytoplasm. The protein localises to the endoplasmic reticulum. Its function is as follows. Plays an important role in control of proteasome function. Inhibits the hydrolysis of protein and peptide substrates by the 20S proteasome. Also inhibits the activation of the proteasome by the proteasome regulatory proteins PA700 and PA28. This chain is Proteasome inhibitor PI31 subunit (PSMF1), found in Pongo abelii (Sumatran orangutan).